Here is a 186-residue protein sequence, read N- to C-terminus: Large ribosomal subunit protein bL9 (186 aa).

The interval 153–186 is disordered; it reads ELRQVKSQSQKSQQQEAKQNEVGEATDSDKADQK. Positions 157–169 are enriched in low complexity; the sequence is VKSQSQKSQQQEA.

This sequence belongs to the bacterial ribosomal protein bL9 family.

Functionally, binds to the 23S rRNA. This chain is Large ribosomal subunit protein bL9, found in Wolbachia sp. subsp. Brugia malayi (strain TRS).